The chain runs to 185 residues: Ribosome-recycling factor (185 aa).

Belongs to the RRF family.

It localises to the cytoplasm. Functionally, responsible for the release of ribosomes from messenger RNA at the termination of protein biosynthesis. May increase the efficiency of translation by recycling ribosomes from one round of translation to another. Plays a role in sporulation. This chain is Ribosome-recycling factor, found in Bacillus subtilis (strain 168).